The sequence spans 459 residues: Glycosyl hydrolase family 109 protein (459 aa).

Positions 1-31 (MHNIHRRHFLKAAGAVTAGLITANITASTHA) form a signal peptide, tat-type signal. NAD(+) is bound by residues 64–65 (ER), D86, 135–138 (WEWH), 155–156 (EV), and N184. Substrate is bound by residues Y213, R232, 244 to 247 (YPTH), and Y326. An NAD(+)-binding site is contributed by Y244.

This sequence belongs to the Gfo/Idh/MocA family. Glycosyl hydrolase 109 subfamily. The cofactor is NAD(+). Predicted to be exported by the Tat system. The position of the signal peptide cleavage has not been experimentally proven.

Functionally, glycosidase. This is Glycosyl hydrolase family 109 protein from Shewanella sp. (strain W3-18-1).